A 296-amino-acid polypeptide reads, in one-letter code: MNLKSPLFLRLSDRLDVYIRLMRADKPIGTLLLLWPTYWALWLASDGIPDLAVLAAFTIGTFLMRSAGCVINDFADRDFDGAVERTKNRPFAQGRVKKKEALLLTAFLCLLAALCLIPLNHLTWLMSLPALFLALTYPFTKRFFPIPQFYLGFAFSFGIPMAFAAVGNSVPVEAWILFAANVLWTLAYDTVYAMADKEDDLKIGIKTSAVTFGRYDIAAVMLCHGGFTLLMAVLGAVIGAAWAYWTAIPIVLLLQYRQYAAIKSRVRQICFETFLANNRIGWVWFAAIFAHTFFAK.

Helical transmembrane passes span 28–48, 51–71, 102–122, 143–163, 174–194, 212–232, 233–253, and 274–294; these read IGTLLLLWPTYWALWLASDGI, LAVLAAFTIGTFLMRSAGCVI, LLLTAFLCLLAALCLIPLNHL, FFPIPQFYLGFAFSFGIPMAF, AWILFAANVLWTLAYDTVYAM, FGRYDIAAVMLCHGGFTLLMA, VLGAVIGAAWAYWTAIPIVLL, and FLANNRIGWVWFAAIFAHTFF.

It belongs to the UbiA prenyltransferase family. Mg(2+) is required as a cofactor.

The protein resides in the cell inner membrane. The catalysed reaction is all-trans-octaprenyl diphosphate + 4-hydroxybenzoate = 4-hydroxy-3-(all-trans-octaprenyl)benzoate + diphosphate. The protein operates within cofactor biosynthesis; ubiquinone biosynthesis. In terms of biological role, catalyzes the prenylation of para-hydroxybenzoate (PHB) with an all-trans polyprenyl group. Mediates the second step in the final reaction sequence of ubiquinone-8 (UQ-8) biosynthesis, which is the condensation of the polyisoprenoid side chain with PHB, generating the first membrane-bound Q intermediate 3-octaprenyl-4-hydroxybenzoate. The chain is 4-hydroxybenzoate octaprenyltransferase from Neisseria gonorrhoeae (strain ATCC 700825 / FA 1090).